A 197-amino-acid chain; its full sequence is MRSATIKRKTKETDIEVAVNLDGTGVVNIATGIGFFDHMLDLLARHSRIDMTVKAVGDLHIDFHHTTEDVGIALGQAVRQALGDMAGITRYASIHMPMDETLTRVVIDVSGRPMLVFRTTFPRDKIGEFDTELVREWFNAFAMNAGITLHVETLYGENAHHIAESCFKGLARALRSALAIDPRNQGEVPSTKGQLGG.

It belongs to the imidazoleglycerol-phosphate dehydratase family.

The protein resides in the cytoplasm. The catalysed reaction is D-erythro-1-(imidazol-4-yl)glycerol 3-phosphate = 3-(imidazol-4-yl)-2-oxopropyl phosphate + H2O. The protein operates within amino-acid biosynthesis; L-histidine biosynthesis; L-histidine from 5-phospho-alpha-D-ribose 1-diphosphate: step 6/9. In Bradyrhizobium sp. (strain BTAi1 / ATCC BAA-1182), this protein is Imidazoleglycerol-phosphate dehydratase.